A 113-amino-acid polypeptide reads, in one-letter code: Large ribosomal subunit protein bL19 (113 aa).

Belongs to the bacterial ribosomal protein bL19 family.

This protein is located at the 30S-50S ribosomal subunit interface and may play a role in the structure and function of the aminoacyl-tRNA binding site. This chain is Large ribosomal subunit protein bL19 (rplS), found in Mycobacterium bovis (strain ATCC BAA-935 / AF2122/97).